We begin with the raw amino-acid sequence, 193 residues long: Achaete-scute homolog 2 (193 aa).

3 disordered regions span residues 1-27 (MDGGTLPRSAPPAPPVPVGCAARRRPA), 37-56 (RRRPATAETGGGAAAVARRN), and 118-177 (GGLR…GALS). The bHLH domain maps to 50–102 (AAVARRNERERNRVKLVNLGFQALRQHVPHGGASKKLSKVETLRSAVEYIRAL). Over residues 140–150 (AASPSRASSSP) the composition is skewed to low complexity.

Efficient DNA binding requires dimerization with another basic helix-loop-helix (bHLH) protein. Forms heterodimers with bHLH transcription factor TCF3. May not heterodimerise with bHLH protein HAND1. In terms of tissue distribution, expressed in the placenta at a stage between the first and second trimesters and when it matures, at about 32-36 weeks. Expressed in the extravillous trophoblasts, the intermediate trophoblasts, and at lower levels in the cytotrophoblasts and stroma of chorionic villi of the developing placenta. Expressed in follicular T-helper (Tfh) cells.

It is found in the nucleus. Functionally, transcription factor. Binds to E-box motifs 5'-CANNTG-3' in the regulatory elements of target genes, probably as a heterodimer with another basic helix-loop-helix (bHLH) protein such as the transcription factor TCF3. May bind both open and closed chromatin, acting as a pioneer transcription factor to allow other factors to bind and activate lineage-specific genes. Required during post-implantation development for the generation of some differentiated trophoblast cell types. Transcriptional activity of ASCL2 may be antagonised in a subset of trophoblast cells by bHLH transcription factor HAND1, perhaps by competing for dimerization with other bHLH proteins. Involved in differentiation and function of follicular T-helper (Tfh) cells, thereby playing a role in germinal center responses; probably modulates expression of genes involved in Tfh cell function, such as BCL6. May also act as a suppressor of Th1-, Th2- and Th17-cell differentiation. Induces the formation of stem cells in intestinal crypts in vitro, synergistically activating transcription of target genes, such as SOX9, together with TCF4/beta-catenin. May form a bistable transcriptional switch, controlling expression of its own gene together with Wnt/R-spondin signaling, and thereby maintaining stem cell characteristics. Modulates expression of target genes, including perhaps down-regulating EGR1/Krox24 and chemokine CXCL10/Mob-1 and up-regulating CXCR4 and CDKN1C/p57kip2, in Schwann cells. May play a role in reducing proliferation of Schwann cells, perhaps acting via modulation of expression of CDKN1C. May be dispensable for blastocyst formation and later embryonic function. May be involved in the determination of neuronal precursors. This Homo sapiens (Human) protein is Achaete-scute homolog 2 (ASCL2).